We begin with the raw amino-acid sequence, 152 residues long: Large ribosomal subunit protein bL9 (152 aa).

This sequence belongs to the bacterial ribosomal protein bL9 family.

In terms of biological role, binds to the 23S rRNA. The sequence is that of Large ribosomal subunit protein bL9 from Picosynechococcus sp. (strain ATCC 27264 / PCC 7002 / PR-6) (Agmenellum quadruplicatum).